Reading from the N-terminus, the 94-residue chain is Translation initiation factor 1A 2 (94 aa).

The S1-like domain maps to 6–80; that stretch reads GRRNLRMPSD…EKANIEWRYS (75 aa).

This sequence belongs to the eIF-1A family.

Its function is as follows. Seems to be required for maximal rate of protein biosynthesis. Enhances ribosome dissociation into subunits and stabilizes the binding of the initiator Met-tRNA(I) to 40 S ribosomal subunits. This chain is Translation initiation factor 1A 2, found in Haloquadratum walsbyi (strain DSM 16790 / HBSQ001).